The following is a 372-amino-acid chain: Trihelix transcription factor GT-4 (372 aa).

Residues 47 to 111 (APKKRAETWA…MCTDKWRNIL (65 aa)) form the Myb-like domain. Ser167 bears the Phosphoserine mark.

The protein localises to the nucleus. Functionally, probable transcription factor that binds specific DNA sequence. The protein is Trihelix transcription factor GT-4 (GT-4) of Arabidopsis thaliana (Mouse-ear cress).